A 492-amino-acid chain; its full sequence is Heat shock factor protein 4 (492 aa).

A DNA-binding region spans residues Val-17–Pro-122. The tract at residues Ser-129–Thr-203 is hydrophobic repeat HR-A/B. The segment at Leu-245 to Pro-322 is interactions with DUSP26, MAPK1 and MAPK2. Positions Ser-263 to Gly-282 are disordered. Residue Lys-293 forms a Glycyl lysine isopeptide (Lys-Gly) (interchain with G-Cter in SUMO) linkage. Residue Ser-298 is modified to Phosphoserine. Residues Gly-337 to Pro-378 are disordered. Residues Leu-364–Leu-389 form a hydrophobic repeat HR-C region.

Belongs to the HSF family. In terms of assembly, homotrimer. Exhibits constitutive DNA binding and forms trimers even in the absence of stress. Interacts with ALKBH4, DUSP26, MAPK1, MAPK2, MAPK8 and MAP kinase p38. Post-translationally, phosphorylated mainly on serine residues. Phosphorylation on Ser-298 promotes sumoylation on Lys-293. In terms of processing, isoform HSF4B is constitutively sumoylated. Sumoylation represses the transcriptional activity and is promoted by phosphorylation on Ser-298. HSFA is not sumoylated. As to expression, preferentially expressed in brain and lung. Also found in the eye. Slightly detected in liver and skeletal muscle. Isoform B is the major species in various tissues.

It is found in the nucleus. In terms of biological role, heat-shock transcription factor that specifically binds heat shock promoter elements (HSE). Required for denucleation and organelle rupture and degradation that occur during eye lens terminal differentiation, when fiber cells that compose the lens degrade all membrane-bound organelles in order to provide lens with transparency to allow the passage of light. In this process, may regulate denucleation of lens fiber cells in part by activating DNASE2B transcription. May be involved in DNA repair through the transcriptional regulation of RAD51. May up-regulate p53/TP53 protein in eye lens fiber cells, possibly through protein stabilization. In the eye lens, controls the expression of alpha-crystallin B chain/CRYAB and consequently may be involved in the regulation of lysosomal acidification. Functionally, transcriptional repressor. Transcriptional activator. The chain is Heat shock factor protein 4 (Hsf4) from Mus musculus (Mouse).